The following is a 247-amino-acid chain: Elongation factor Ts (247 aa).

Residues 82-85 form an involved in Mg(2+) ion dislocation from EF-Tu region; it reads TDFV.

It belongs to the EF-Ts family.

Its subcellular location is the cytoplasm. Functionally, associates with the EF-Tu.GDP complex and induces the exchange of GDP to GTP. It remains bound to the aminoacyl-tRNA.EF-Tu.GTP complex up to the GTP hydrolysis stage on the ribosome. This Arthrospira platensis (Spirulina platensis) protein is Elongation factor Ts (tsf).